The sequence spans 399 residues: Centrosomal protein 43 (399 aa).

In terms of domain architecture, LisH spans 70–102; sequence DGRLVASLVAEFLQFFNLDFTLAVFQPETSTFQ. A Phosphothreonine modification is found at threonine 143. Residues 143-311 are disordered; sequence TSGEGALDLS…LKESESKRGN (169 aa). Phosphoserine is present on residues serine 152, serine 156, serine 160, and serine 202. The segment covering 197–209 has biased composition (low complexity); the sequence is NDASHSDTSISSS. The span at 245 to 256 shows a compositional bias: acidic residues; the sequence is PEEDDLEGDSFF. Over residues 286–302 the composition is skewed to low complexity; that stretch reads APPLKSGLSSLAGAPSL. Serine 301 and serine 326 each carry phosphoserine. Residues 328-357 are disordered; that stretch reads GLGTGEEDDYVDDFNSTSHRSEKSELSIGE. Tyrosine 337 bears the Phosphotyrosine mark.

The protein belongs to the CEP43 family. Homodimer. Part of a ternary complex that contains CEP350, CEP43 and MAPRE1. Interacts directly with CEP350 and MAPRE1. Interacts with CEP19. Interacts (via N-terminus) with CEP350 (via C-terminus).

The protein resides in the cytoplasm. Its subcellular location is the cytoskeleton. The protein localises to the microtubule organizing center. It localises to the centrosome. It is found in the centriole. The protein resides in the cilium basal body. Functionally, required for anchoring microtubules to the centrosomes. Required for ciliation. This Bos taurus (Bovine) protein is Centrosomal protein 43 (CEP43).